The sequence spans 352 residues: UDP-N-acetylglucosamine--N-acetylmuramyl-(pentapeptide) pyrophosphoryl-undecaprenol N-acetylglucosamine transferase (352 aa).

UDP-N-acetyl-alpha-D-glucosamine is bound by residues Ser195 and Gln287.

The protein belongs to the glycosyltransferase 28 family. MurG subfamily.

It is found in the cell membrane. It carries out the reaction Mur2Ac(oyl-L-Ala-gamma-D-Glu-L-Lys-D-Ala-D-Ala)-di-trans,octa-cis-undecaprenyl diphosphate + UDP-N-acetyl-alpha-D-glucosamine = beta-D-GlcNAc-(1-&gt;4)-Mur2Ac(oyl-L-Ala-gamma-D-Glu-L-Lys-D-Ala-D-Ala)-di-trans,octa-cis-undecaprenyl diphosphate + UDP + H(+). The protein operates within cell wall biogenesis; peptidoglycan biosynthesis. Functionally, cell wall formation. Catalyzes the transfer of a GlcNAc subunit on undecaprenyl-pyrophosphoryl-MurNAc-pentapeptide (lipid intermediate I) to form undecaprenyl-pyrophosphoryl-MurNAc-(pentapeptide)GlcNAc (lipid intermediate II). This Streptococcus pneumoniae (strain 70585) protein is UDP-N-acetylglucosamine--N-acetylmuramyl-(pentapeptide) pyrophosphoryl-undecaprenol N-acetylglucosamine transferase.